The primary structure comprises 53 residues: Sec-independent protein translocase protein TatA (53 aa).

Residues Met-1–Ala-21 form a helical membrane-spanning segment.

Belongs to the TatA/E family. The Tat system comprises two distinct complexes: a TatABC complex, containing multiple copies of TatA, TatB and TatC subunits, and a separate TatA complex, containing only TatA subunits. Substrates initially bind to the TatABC complex, which probably triggers association of the separate TatA complex to form the active translocon.

It is found in the cell inner membrane. Its function is as follows. Part of the twin-arginine translocation (Tat) system that transports large folded proteins containing a characteristic twin-arginine motif in their signal peptide across membranes. TatA could form the protein-conducting channel of the Tat system. The sequence is that of Sec-independent protein translocase protein TatA from Rickettsia africae (strain ESF-5).